The primary structure comprises 547 residues: Chaperonin GroEL (547 aa).

Residues 30–33, Lys-51, 87–91, Gly-415, and Asp-495 each bind ATP; these read TLGP and DGTTT.

The protein belongs to the chaperonin (HSP60) family. In terms of assembly, forms a cylinder of 14 subunits composed of two heptameric rings stacked back-to-back. Interacts with the co-chaperonin GroES.

The protein localises to the cytoplasm. It carries out the reaction ATP + H2O + a folded polypeptide = ADP + phosphate + an unfolded polypeptide.. Together with its co-chaperonin GroES, plays an essential role in assisting protein folding. The GroEL-GroES system forms a nano-cage that allows encapsulation of the non-native substrate proteins and provides a physical environment optimized to promote and accelerate protein folding. This is Chaperonin GroEL from Pasteurella multocida (strain Pm70).